Consider the following 67-residue polypeptide: Large ribosomal subunit protein uL29 (67 aa).

It belongs to the universal ribosomal protein uL29 family.

The polypeptide is Large ribosomal subunit protein uL29 (Moorella thermoacetica (strain ATCC 39073 / JCM 9320)).